Reading from the N-terminus, the 554-residue chain is MNQLCVERNLSISTAYIKSKPKKYIERIKKKKSSNKSIKSQHKFEGSKIANKNNELKDIKSKDPKHYENHINKNTKHKDILLKSKRSDNFKFSRRGFILSFTGNLEDFYNLSEEPLGKGTYGCVYKATDKLLKIQRAVKVVSKKKLKNIPRFRQEIDIMKNLDHPNVIKLLETFEDEEQIYLIMDLCTGGELFDKIIKKGSFVEMYASFIMKQIFSVLNYLHIRNICHRDIKPENFLFYDKSTESLIKIIDFGLAAYFNDIDYEMKTKAGTPYYVAPQVLTGCYDYKCDLWSAGVLFYIILCGYPPFYGESDHEILSMVKKGKYNFKGKEWNNISEEAKDLIKRCLTIDSGKRINASEALKHPWFKKKKGSFNLDVKMDIHVLENFKNYALLLKLQKLAMTIIAQQSNDYDLQQLKTVFLYLDEDGKGNITKNQLKKGLENSGLKLPQNFDVLLDQIDSDGSGRIDYTEFLAAALDRKHLSKKLIYCAFRVFDVDNDGEITTAELAHILYNGNKKGSITQKDVNQVKKMIQEVDKNNDGKIDFYEFCEMMKLKY.

Residues 30-55 (KKKSSNKSIKSQHKFEGSKIANKNNE) are disordered. Residues 110–365 (NLSEEPLGKG…ASEALKHPWF (256 aa)) form the Protein kinase domain. ATP-binding positions include 116-124 (LGKGTYGCV) and lysine 139. Residue aspartate 230 is the Proton acceptor of the active site. The J domain autoinhibitory motif motif lies at 385–393 (NFKNYALLL). The interval 385 to 420 (NFKNYALLLKLQKLAMTIIAQQSNDYDLQQLKTVFL) is j domain. The J domain EF-hand interaction motif signature appears at 394–403 (KLQKLAMTII). EF-hand domains follow at residues 410–445 (YDLQQLKTVFLYLDEDGKGNITKNQLKKGLENSGLK), 448–479 (QNFDVLLDQIDSDGSGRIDYTEFLAAALDRKH), 480–515 (LSKKLIYCAFRVFDVDNDGEITTAELAHILYNGNKK), and 521–554 (KDVNQVKKMIQEVDKNNDGKIDFYEFCEMMKLKY). Residues aspartate 458, aspartate 460, serine 462, arginine 464, glutamate 469, aspartate 493, aspartate 495, aspartate 497, glutamate 499, glutamate 504, aspartate 534, asparagine 536, aspartate 538, lysine 540, and glutamate 545 each contribute to the Ca(2+) site.

Belongs to the protein kinase superfamily. Ser/Thr protein kinase family. CDPK subfamily. Requires Mg(2+) as cofactor.

The protein localises to the cytoplasm. The enzyme catalyses L-seryl-[protein] + ATP = O-phospho-L-seryl-[protein] + ADP + H(+). It catalyses the reaction L-threonyl-[protein] + ATP = O-phospho-L-threonyl-[protein] + ADP + H(+). Activated by calcium. Upon calcium binding to the EF-hand domain 2, the C-terminus of the junction domain (J domain) undergoes a conformational change which results in the dissociation of the pseudo-substrate inhibitory motif from the catalytic domain. This, in turn, may facilitate the autophosphorylation of the activation loop at Thr-271, which leads to the kinase activation. Functionally, calcium-dependent protein kinase which acts as a sensor and effector of intracellular Ca(2+) levels probably in part downstream of cGMP-activated PKG kinase. In the mosquito midgut, regulates the gliding motility of the ookinete which is essential for the ookinete to invade the midgut epithelium. However, another study showed that while required for ookinete invasion of the midgut epithelium, is not required for ookinete gliding motility. The sequence is that of Calcium-dependent protein kinase 3 from Plasmodium berghei (strain Anka).